Reading from the N-terminus, the 125-residue chain is MDKKSAALYKKMQAEIESYQNLQKSCLKMVKQRAVLESQLNENKCVLDELNLLGPDNKVYKLFGPVLVKQELEESRQNVGKRIEYISKELKSSTDALENMEKDMLKHRESVAKYQQQCQVAAAMQ.

The protein belongs to the prefoldin subunit beta family. Heterohexamer of two PFD-alpha type and four PFD-beta type subunits.

Functionally, binds specifically to cytosolic chaperonin (c-CPN) and transfers target proteins to it. Binds to nascent polypeptide chain and promotes folding in an environment in which there are many competing pathways for nonnative proteins. In Drosophila melanogaster (Fruit fly), this protein is Probable prefoldin subunit 6.